A 375-amino-acid chain; its full sequence is MKFELDTTDGRARRGRLVFDRGIVETPAFMPVGTYGTVKGMTPEEVEATGAQIILGNTFHLWLRPGQEIMKLHGDLHDFMQWKGPILTDSGGFQVFSLGDIRKITEQGVHFRNPINGDPIFLDPEKSMEIQYDLGSDIVMIFDECTPYPADWDYAKRSMEMSLRWAKRSRDRFDSLGNKNALFGIIQGSVYEDLRDISVKGLVEIGFDGYAVGGLAVGEPKADMHRILEHVCPQIPADKPRYLMGVGKPEDLVEGVRRGIDMFDCVMPTRNARNGHLFVTDGVVKIRNAKHKSDTSPLDAECDCYTCRNYSRAYLHHLDRCNEILGARLNTIHNLRYYQRLMAGLRKAIEEGKLESFVTEFYQRQGRPVPPLNVD.

Asp89 (proton acceptor) is an active-site residue. Substrate contacts are provided by residues Asp89–Phe93, Asp143, Gln187, and Gly214. The RNA binding stretch occupies residues Gly245–Asp251. Asp264 functions as the Nucleophile in the catalytic mechanism. Positions Thr269 to Arg273 are RNA binding; important for wobble base 34 recognition. Zn(2+) is bound by residues Cys302, Cys304, Cys307, and His333.

The protein belongs to the queuine tRNA-ribosyltransferase family. In terms of assembly, homodimer. Within each dimer, one monomer is responsible for RNA recognition and catalysis, while the other monomer binds to the replacement base PreQ1. Zn(2+) serves as cofactor.

It catalyses the reaction 7-aminomethyl-7-carbaguanine + guanosine(34) in tRNA = 7-aminomethyl-7-carbaguanosine(34) in tRNA + guanine. It participates in tRNA modification; tRNA-queuosine biosynthesis. Catalyzes the base-exchange of a guanine (G) residue with the queuine precursor 7-aminomethyl-7-deazaguanine (PreQ1) at position 34 (anticodon wobble position) in tRNAs with GU(N) anticodons (tRNA-Asp, -Asn, -His and -Tyr). Catalysis occurs through a double-displacement mechanism. The nucleophile active site attacks the C1' of nucleotide 34 to detach the guanine base from the RNA, forming a covalent enzyme-RNA intermediate. The proton acceptor active site deprotonates the incoming PreQ1, allowing a nucleophilic attack on the C1' of the ribose to form the product. After dissociation, two additional enzymatic reactions on the tRNA convert PreQ1 to queuine (Q), resulting in the hypermodified nucleoside queuosine (7-(((4,5-cis-dihydroxy-2-cyclopenten-1-yl)amino)methyl)-7-deazaguanosine). This chain is Queuine tRNA-ribosyltransferase, found in Salmonella enteritidis PT4 (strain P125109).